A 206-amino-acid chain; its full sequence is MAAAVLGQLGALWIHNLRSRGRLAWGVLPQSYVHTSASLDISRKWEKKNKIVYPPQLPGEPRRPAEIYHCRRQIKYSKDKMWYLAKLIRGMSIDQALAQLEFNDKKGAKIIKEVLLEAQDMAVRDHNVEFRSNLYIAESTSGRGQYLKRIRYHGRGRFGIMERVYCHYFVKLVEGPPPPPEPPKMAVAHAKEYIQQLRSRTIIHTL.

The transit peptide at 1–40 (MAAAVLGQLGALWIHNLRSRGRLAWGVLPQSYVHTSASLD) directs the protein to the mitochondrion.

This sequence belongs to the universal ribosomal protein uL22 family. Component of the mitochondrial ribosome large subunit (39S) which comprises a 16S rRNA and about 50 distinct proteins.

It is found in the mitochondrion. In Pongo abelii (Sumatran orangutan), this protein is Large ribosomal subunit protein uL22m (MRPL22).